A 1172-amino-acid polypeptide reads, in one-letter code: Short transient receptor potential channel 2 (1172 aa).

The span at 1 to 10 (MLMSRTDSKS) shows a compositional bias: basic and acidic residues. Disordered stretches follow at residues 1-22 (MLMS…MFKD), 69-98 (VVDP…WLTN), 140-227 (SAAR…GGVQ), and 249-271 (ATCG…SESV). Residues 1–659 (MLMSRTDSKS…PKSQLGRLLK (659 aa)) lie on the Cytoplasmic side of the membrane. The span at 75-87 (PGSSGLNQNSTDV) shows a compositional bias: polar residues. A compositionally biased stretch (basic and acidic residues) spans 166 to 177 (ESAEPRAEEPNR). Polar residues predominate over residues 195-204 (SLSNSSSQPN). Over residues 206–218 (RTGRTRQRQHRPQ) the composition is skewed to basic residues. Positions 261–270 (SPASLSSSES) are enriched in low complexity. ANK repeat units follow at residues 301–330 (KFPP…DASG), 377–406 (QIHE…REKG), and 430–459 (PGVT…TIAR). A helical transmembrane segment spans residues 660 to 680 (IPVLKFLLHSASYLWFLIFLL). At 681–702 (GESLVMETQLSTFKGRSQSVWE) the chain is on the extracellular side. A helical transmembrane segment spans residues 703 to 723 (TSLHMIWVTGFLWFECKEVWI). Topologically, residues 724-738 (EGLRSYLLDWWNFLD) are cytoplasmic. Residues 739–759 (VVILSLYLASFALRLLLAGLA) form a helical membrane-spanning segment. At 760-789 (YMHCRDASDSTTCRYFTTAERSEWRTEDPQ) the chain is on the extracellular side. The chain crosses the membrane as a helical span at residues 790 to 810 (FLAEVLFAVTSMLSFTRLAYI). At 811–833 (LPAHESLGTLQISIGKMIDDMIR) the chain is on the cytoplasmic side. A helical transmembrane segment spans residues 834–854 (FMFILMIILTAFLCGLNNIYV). Over 855–899 (PYQESEKLGNFNETFQFLFWTMFGMEEHTVVDMPQFLVPEFVGRA) the chain is Extracellular. A helical transmembrane segment spans residues 900-920 (MYGIFTIVMVIVLLNMLIAMI). Residues 921–1172 (TNSFQKIEDD…EGDLETKGES (252 aa)) are Cytoplasmic-facing. Residues 1118–1172 (VSLGDGLDGTGEAGAPAPGEPGSSSSAHVLVHREQEAEGSGDLLLEGDLETKGES) are disordered. The span at 1130 to 1144 (AGAPAPGEPGSSSSA) shows a compositional bias: low complexity.

It belongs to the transient receptor (TC 1.A.4) family. STrpC subfamily. TRPC2 sub-subfamily. As to expression, isoform 3 is ubiquitously expressed at low levels. Isoform 4 is expressed exclusively in vomeronasal organ.

The protein resides in the membrane. In terms of biological role, thought to form a receptor-activated non-selective calcium permeant cation channel. Probably is operated by a phosphatidylinositol second messenger system activated by receptor tyrosine kinases or G-protein coupled receptors. May also be activated by intracellular calcium store depletion. Plays a role in mediating responsivity to pheromones that elicit aggressive and mating behaviors. Required for response to the Esp1 pheromone which enhances female sexual receptive behavior and to the Esp22 pheromone which inhibits adult male mating behavior. In Mus musculus (Mouse), this protein is Short transient receptor potential channel 2 (Trpc2).